The following is a 357-amino-acid chain: Protein RecA (357 aa).

67 to 74 serves as a coordination point for ATP; that stretch reads GPESSGKT.

The protein belongs to the RecA family.

It localises to the cytoplasm. Functionally, can catalyze the hydrolysis of ATP in the presence of single-stranded DNA, the ATP-dependent uptake of single-stranded DNA by duplex DNA, and the ATP-dependent hybridization of homologous single-stranded DNAs. It interacts with LexA causing its activation and leading to its autocatalytic cleavage. The protein is Protein RecA of Leifsonia xyli subsp. xyli (strain CTCB07).